We begin with the raw amino-acid sequence, 258 residues long: Ubiquinone/menaquinone biosynthesis C-methyltransferase UbiE (258 aa).

S-adenosyl-L-methionine is bound by residues T81, D102, and N130–A131.

Belongs to the class I-like SAM-binding methyltransferase superfamily. MenG/UbiE family.

The enzyme catalyses a 2-demethylmenaquinol + S-adenosyl-L-methionine = a menaquinol + S-adenosyl-L-homocysteine + H(+). It catalyses the reaction a 2-methoxy-6-(all-trans-polyprenyl)benzene-1,4-diol + S-adenosyl-L-methionine = a 5-methoxy-2-methyl-3-(all-trans-polyprenyl)benzene-1,4-diol + S-adenosyl-L-homocysteine + H(+). It functions in the pathway quinol/quinone metabolism; menaquinone biosynthesis; menaquinol from 1,4-dihydroxy-2-naphthoate: step 2/2. Its pathway is cofactor biosynthesis; ubiquinone biosynthesis. Functionally, methyltransferase required for the conversion of demethylmenaquinol (DMKH2) to menaquinol (MKH2) and the conversion of 2-polyprenyl-6-methoxy-1,4-benzoquinol (DDMQH2) to 2-polyprenyl-3-methyl-6-methoxy-1,4-benzoquinol (DMQH2). This Sinorhizobium fredii (strain NBRC 101917 / NGR234) protein is Ubiquinone/menaquinone biosynthesis C-methyltransferase UbiE.